Here is a 578-residue protein sequence, read N- to C-terminus: Proline--tRNA ligase (578 aa).

The protein belongs to the class-II aminoacyl-tRNA synthetase family. ProS type 1 subfamily. As to quaternary structure, homodimer.

The protein resides in the cytoplasm. The catalysed reaction is tRNA(Pro) + L-proline + ATP = L-prolyl-tRNA(Pro) + AMP + diphosphate. Catalyzes the attachment of proline to tRNA(Pro) in a two-step reaction: proline is first activated by ATP to form Pro-AMP and then transferred to the acceptor end of tRNA(Pro). As ProRS can inadvertently accommodate and process non-cognate amino acids such as alanine and cysteine, to avoid such errors it has two additional distinct editing activities against alanine. One activity is designated as 'pretransfer' editing and involves the tRNA(Pro)-independent hydrolysis of activated Ala-AMP. The other activity is designated 'posttransfer' editing and involves deacylation of mischarged Ala-tRNA(Pro). The misacylated Cys-tRNA(Pro) is not edited by ProRS. The chain is Proline--tRNA ligase from Syntrophus aciditrophicus (strain SB).